Reading from the N-terminus, the 757-residue chain is Catalase-peroxidase (757 aa).

Residues 101-248 constitute a cross-link (tryptophyl-tyrosyl-methioninium (Trp-Tyr) (with M-274)); the sequence is WHSAGTYRIG…LAAVQMGLIY (148 aa). The active-site Proton acceptor is the histidine 102. Residues 213–232 form a disordered region; sequence VHHPDEHRGAKEKASKNSDS. Residues 248–274 constitute a cross-link (tryptophyl-tyrosyl-methioninium (Tyr-Met) (with W-101)); sequence YVNPEGPDGCPDPLASARDIRETFARM. Residue histidine 289 participates in heme b binding.

Belongs to the peroxidase family. Peroxidase/catalase subfamily. As to quaternary structure, homodimer or homotetramer. Requires heme b as cofactor. In terms of processing, formation of the three residue Trp-Tyr-Met cross-link is important for the catalase, but not the peroxidase activity of the enzyme.

It carries out the reaction H2O2 + AH2 = A + 2 H2O. It catalyses the reaction 2 H2O2 = O2 + 2 H2O. In terms of biological role, bifunctional enzyme with both catalase and broad-spectrum peroxidase activity. The chain is Catalase-peroxidase from Xylella fastidiosa (strain M23).